The following is a 2126-amino-acid chain: Phthioceranic/hydroxyphthioceranic acid synthase (2126 aa).

One can recognise a Ketosynthase family 3 (KS3) domain in the interval 24–447; sequence VTPVAVIGMA…GTNVHAVVEQ (424 aa). Cys196 acts as the Acyl-thioester intermediate; for beta-ketoacyl synthase activity in catalysis. Catalysis depends on for beta-ketoacyl synthase activity residues His331 and His367. The segment at 449-549 is linker domain (LD); the sequence is PQTEAQPHAA…VYQPAVGQDD (101 aa). Positions 550 to 849 are acyltransferase (AT); it reads RGPVWLFSGQ…VAALAGMRRE (300 aa). The Acyl-ester intermediate; for acyltransferase activity role is filled by Ser641. A dehydratase (DH) region spans residues 909-1191; that stretch reads STVAVHPLLG…LAVCGLRIGT (283 aa). An N-terminal hotdog fold region spans residues 914–1032; it reads HPLLGAHVRL…RRASAVLQQV (119 aa). One can recognise a PKS/mFAS DH domain in the interval 914 to 1198; it reads HPLLGAHVRL…IGTGVSERDK (285 aa). The Proton acceptor; for dehydratase activity role is filled by His947. A C-terminal hotdog fold region spans residues 1051-1198; sequence PCRVDGEDLR…IGTGVSERDK (148 aa). Catalysis depends on Asp1115, which acts as the Proton donor; for dehydratase activity. The pseudo beta-ketoacyl reductase (PsiKR) stretch occupies residues 1227–1398; sequence KWLLISDCAA…SEEDETAWRD (172 aa). The segment at 1426 to 1750 is enoylreductase (ER); the sequence is SGMRLQIRTP…EHTGKLVLHI (325 aa). A beta-ketoacyl reductase (KR) region spans residues 1772 to 2019; it reads GSYIITGGLG…AERSRFFEVF (248 aa). Residues 1780-1783, 1803-1806, 1831-1832, and 1904-1905 each bind NADP(+); these read LGGL, SRTQ, DI, and FS. The region spanning 2040–2126 is the Carrier domain; sequence DEWPARLRQL…DAPAAALSSQ (87 aa). Ser2075 carries the O-(pantetheine 4'-phosphoryl)serine modification.

Pantetheine 4'-phosphate is required as a cofactor.

The catalysed reaction is hexadecanoyl-[(hydroxy)phthioceranic acid synthase] + 7 (S)-methylmalonyl-CoA + 14 NADPH + 21 H(+) = C37-phthioceranyl-[(hydroxy)phthioceranic acid synthase] + 7 CO2 + 14 NADP(+) + 7 CoA + 7 H2O. It catalyses the reaction hexadecanoyl-[(hydroxy)phthioceranic acid synthase] + 8 (S)-methylmalonyl-CoA + 16 NADPH + 24 H(+) = C40-phthioceranyl-[(hydroxy)phthioceranic acid synthase] + 8 CO2 + 16 NADP(+) + 8 CoA + 8 H2O. The protein operates within lipid metabolism; fatty acid biosynthesis. It participates in glycolipid metabolism; sulfolipid-1 biosynthesis. In terms of biological role, involved in sulfolipid-1 biosynthesis. Catalyzes the synthesis of the hepta- and octamethyl phthioceranic and hydroxyphthioceranic acids, the methyl-branched acyl constituents of sulfolipids. The chain is Phthioceranic/hydroxyphthioceranic acid synthase (pks2) from Mycobacterium bovis (strain ATCC BAA-935 / AF2122/97).